The sequence spans 233 residues: 7-cyano-7-deazaguanine synthase (233 aa).

Position 7 to 17 (7 to 17 (LSGGLDSAVTS)) interacts with ATP. The Zn(2+) site is built by Cys-195, Cys-206, Cys-209, and Cys-212.

It belongs to the QueC family. It depends on Zn(2+) as a cofactor.

It carries out the reaction 7-carboxy-7-deazaguanine + NH4(+) + ATP = 7-cyano-7-deazaguanine + ADP + phosphate + H2O + H(+). It functions in the pathway purine metabolism; 7-cyano-7-deazaguanine biosynthesis. Functionally, catalyzes the ATP-dependent conversion of 7-carboxy-7-deazaguanine (CDG) to 7-cyano-7-deazaguanine (preQ(0)). The sequence is that of 7-cyano-7-deazaguanine synthase from Methanococcus maripaludis (strain DSM 14266 / JCM 13030 / NBRC 101832 / S2 / LL).